A 131-amino-acid polypeptide reads, in one-letter code: Small ribosomal subunit protein uS11 (131 aa).

Belongs to the universal ribosomal protein uS11 family. In terms of assembly, part of the 30S ribosomal subunit. Interacts with proteins S7 and S18. Binds to IF-3.

In terms of biological role, located on the platform of the 30S subunit, it bridges several disparate RNA helices of the 16S rRNA. Forms part of the Shine-Dalgarno cleft in the 70S ribosome. This Neisseria gonorrhoeae (strain ATCC 700825 / FA 1090) protein is Small ribosomal subunit protein uS11.